A 215-amino-acid polypeptide reads, in one-letter code: Ribosome maturation factor RimP (215 aa).

The tract at residues lysine 180–serine 215 is disordered. Acidic residues predominate over residues proline 195–alanine 207.

The protein belongs to the RimP family.

It is found in the cytoplasm. Functionally, required for maturation of 30S ribosomal subunits. This is Ribosome maturation factor RimP from Mesorhizobium japonicum (strain LMG 29417 / CECT 9101 / MAFF 303099) (Mesorhizobium loti (strain MAFF 303099)).